An 837-amino-acid polypeptide reads, in one-letter code: Vacuolar membrane protease (837 aa).

The Cytoplasmic segment spans residues 1-36 (MSEEEVHDTSSEASEVFTNQPNAFVRGVRSIFGYRK). A helical membrane pass occupies residues 37–57 (TSLTLFVILTIVVTAGLSFYD). Residues 58–355 (NSLELTIELP…FATPISALAR (298 aa)) are Vacuolar-facing. An N-linked (GlcNAc...) asparagine glycan is attached at asparagine 143. The Zn(2+) site is built by histidine 157 and aspartate 169. The Proton acceptor role is filled by glutamate 201. Residues glutamate 202, glutamate 227, and histidine 299 each contribute to the Zn(2+) site. Residues 356–376 (VNLVLLVLFPVVSTPLLFVIV) traverse the membrane as a helical segment. Residues 377 to 384 (KYKKWKLR) are Cytoplasmic-facing. A helical membrane pass occupies residues 385–405 (VTNFLGVPLAMGLAVAVGQVG). The Vacuolar portion of the chain corresponds to 406-415 (NPMLVSSHPM). The helical transmembrane segment at 416–436 (MVVATTTSIVVLVYYVVLNGV) threads the bilayer. Over 437-446 (DWVNTSSDQK) the chain is Cytoplasmic. The helical transmembrane segment at 447–467 (LVTMIEVSFVYWVVLVYVTWS) threads the bilayer. Over 468–474 (GGDHTGE) the chain is Vacuolar. The helical transmembrane segment at 475-495 (FGVTVLFFVQASTSLLGLIGW) threads the bilayer. Residues 496 to 539 (TFTRVRGGDEPLLSGEEERYGTEDERDTEKPLVEHNYDWSLQYL) lie on the Cytoplasmic side of the membrane. A helical membrane pass occupies residues 540-560 (LIVPVSSLVVYNSGWLVLEGV). Asparagine 561 is a glycosylation site (N-linked (GlcNAc...) asparagine). Residues 561–572 (NKTVQESLASEH) lie on the Vacuolar side of the membrane. The helical transmembrane segment at 573-593 (LIYWIVVVFSQFLVLPVVPFI) threads the bilayer. Residues 594–598 (TKFNR) lie on the Cytoplasmic side of the membrane. Residues 599-619 (YIVLGLSVVAVVGVLMSMAVH) traverse the membrane as a helical segment. The Vacuolar segment spans residues 620 to 837 (PFNQGSPMKL…LVGVVKHVDV (218 aa)). Residue asparagine 689 is glycosylated (N-linked (GlcNAc...) asparagine).

Belongs to the peptidase M28 family. The cofactor is Zn(2+).

It is found in the vacuole membrane. Its function is as follows. May be involved in vacuolar sorting and osmoregulation. The sequence is that of Vacuolar membrane protease from Candida albicans (strain WO-1) (Yeast).